Reading from the N-terminus, the 457-residue chain is Bifunctional protein GlmU (457 aa).

A pyrophosphorylase region spans residues 1–230; sequence MLNVVILAAG…SWETLGVNSR (230 aa). Residues 7–10, K21, Q73, 78–79, 104–106, G140, E155, N170, and N228 contribute to the UDP-N-acetyl-alpha-D-glucosamine site; these read LAAG, GT, and YGD. D106 contributes to the Mg(2+) binding site. N228 contributes to the Mg(2+) binding site. The tract at residues 231–251 is linker; it reads VQQAQLERAWQSELARRQLEA. The N-acetyltransferase stretch occupies residues 252-457; sequence GVTLADPARF…EGWKRPVKKS (206 aa). The UDP-N-acetyl-alpha-D-glucosamine site is built by R334 and K352. H364 (proton acceptor) is an active-site residue. The UDP-N-acetyl-alpha-D-glucosamine site is built by Y367 and N378. Acetyl-CoA-binding positions include A381, 387–388, S406, A424, and R441; that span reads NY.

In the N-terminal section; belongs to the N-acetylglucosamine-1-phosphate uridyltransferase family. It in the C-terminal section; belongs to the transferase hexapeptide repeat family. In terms of assembly, homotrimer. Mg(2+) serves as cofactor.

Its subcellular location is the cytoplasm. It catalyses the reaction alpha-D-glucosamine 1-phosphate + acetyl-CoA = N-acetyl-alpha-D-glucosamine 1-phosphate + CoA + H(+). The enzyme catalyses N-acetyl-alpha-D-glucosamine 1-phosphate + UTP + H(+) = UDP-N-acetyl-alpha-D-glucosamine + diphosphate. Its pathway is nucleotide-sugar biosynthesis; UDP-N-acetyl-alpha-D-glucosamine biosynthesis; N-acetyl-alpha-D-glucosamine 1-phosphate from alpha-D-glucosamine 6-phosphate (route II): step 2/2. It functions in the pathway nucleotide-sugar biosynthesis; UDP-N-acetyl-alpha-D-glucosamine biosynthesis; UDP-N-acetyl-alpha-D-glucosamine from N-acetyl-alpha-D-glucosamine 1-phosphate: step 1/1. It participates in bacterial outer membrane biogenesis; LPS lipid A biosynthesis. Functionally, catalyzes the last two sequential reactions in the de novo biosynthetic pathway for UDP-N-acetylglucosamine (UDP-GlcNAc). The C-terminal domain catalyzes the transfer of acetyl group from acetyl coenzyme A to glucosamine-1-phosphate (GlcN-1-P) to produce N-acetylglucosamine-1-phosphate (GlcNAc-1-P), which is converted into UDP-GlcNAc by the transfer of uridine 5-monophosphate (from uridine 5-triphosphate), a reaction catalyzed by the N-terminal domain. This chain is Bifunctional protein GlmU, found in Bordetella bronchiseptica (strain ATCC BAA-588 / NCTC 13252 / RB50) (Alcaligenes bronchisepticus).